Reading from the N-terminus, the 323-residue chain is MRTATLYRYSVPMEAGVILRHQRLKSRDGLLVKLQQGELSGWGEIAPLPEFSQETLDQAQVAAECWLQHWVSGVESDDSVLPSVAFGLSCAQAELNQTLPLSADYRKAPLCTGDPDELFAVLQALPGEKVAKVKVGLYEAVRDGMIVNVLLEALPDLTLRLDANRSWSRAKADGFAKYVNPALRSRIAFLEEPCKTRAESREFAQDTGIAIAWDESVREADFQVEAEPGVAAIVIKPTLVGSLSRCQQLVQQAHQAGLVAVISSSIESSLGLTQLARLAAWLTPATVPGLDTLDLMQAQVVRPWPDSPLPLITTEQLGVVWHR.

Residue K134 is the Proton donor of the active site. The Mg(2+) site is built by D162, E191, and D214. K236 serves as the catalytic Proton acceptor.

Belongs to the mandelate racemase/muconate lactonizing enzyme family. MenC type 1 subfamily. A divalent metal cation is required as a cofactor.

It carries out the reaction (1R,6R)-6-hydroxy-2-succinyl-cyclohexa-2,4-diene-1-carboxylate = 2-succinylbenzoate + H2O. The protein operates within quinol/quinone metabolism; 1,4-dihydroxy-2-naphthoate biosynthesis; 1,4-dihydroxy-2-naphthoate from chorismate: step 4/7. Its pathway is quinol/quinone metabolism; menaquinone biosynthesis. Converts 2-succinyl-6-hydroxy-2,4-cyclohexadiene-1-carboxylate (SHCHC) to 2-succinylbenzoate (OSB). This is o-succinylbenzoate synthase from Yersinia pseudotuberculosis serotype O:1b (strain IP 31758).